Reading from the N-terminus, the 298-residue chain is Inosose dehydratase (298 aa).

Belongs to the IolE/MocC family. The cofactor is glutathione. It depends on Co(2+) as a cofactor. Requires Mn(2+) as cofactor.

The catalysed reaction is scyllo-inosose = 3D-3,5/4-trihydroxycyclohexane-1,2-dione + H2O. It functions in the pathway polyol metabolism; myo-inositol degradation into acetyl-CoA; acetyl-CoA from myo-inositol: step 2/7. Its function is as follows. Catalyzes the dehydration of inosose (2-keto-myo-inositol, 2KMI or 2,4,6/3,5-pentahydroxycyclohexanone) to 3D-(3,5/4)-trihydroxycyclohexane-1,2-dione (D-2,3-diketo-4-deoxy-epi-inositol). The polypeptide is Inosose dehydratase (Geobacillus thermodenitrificans (strain NG80-2)).